The following is a 674-amino-acid chain: DNA-directed RNA polymerase subunit beta' (674 aa).

The Zn(2+) site is built by C69, C71, C87, and C90. D494, D496, and D498 together coordinate Mg(2+).

Belongs to the RNA polymerase beta' chain family. RpoC1 subfamily. In plastids the minimal PEP RNA polymerase catalytic core is composed of four subunits: alpha, beta, beta', and beta''. When a (nuclear-encoded) sigma factor is associated with the core the holoenzyme is formed, which can initiate transcription. Mg(2+) is required as a cofactor. Requires Zn(2+) as cofactor.

It localises to the plastid. Its subcellular location is the chloroplast. It catalyses the reaction RNA(n) + a ribonucleoside 5'-triphosphate = RNA(n+1) + diphosphate. Functionally, DNA-dependent RNA polymerase catalyzes the transcription of DNA into RNA using the four ribonucleoside triphosphates as substrates. The protein is DNA-directed RNA polymerase subunit beta' of Psilotum nudum (Whisk fern).